Reading from the N-terminus, the 340-residue chain is N-acetyl-gamma-glutamyl-phosphate reductase (340 aa).

Cys146 is an active-site residue.

Belongs to the NAGSA dehydrogenase family. Type 1 subfamily.

It is found in the cytoplasm. The enzyme catalyses N-acetyl-L-glutamate 5-semialdehyde + phosphate + NADP(+) = N-acetyl-L-glutamyl 5-phosphate + NADPH + H(+). It functions in the pathway amino-acid biosynthesis; L-arginine biosynthesis; N(2)-acetyl-L-ornithine from L-glutamate: step 3/4. In terms of biological role, catalyzes the NADPH-dependent reduction of N-acetyl-5-glutamyl phosphate to yield N-acetyl-L-glutamate 5-semialdehyde. The chain is N-acetyl-gamma-glutamyl-phosphate reductase from Rubrobacter xylanophilus (strain DSM 9941 / JCM 11954 / NBRC 16129 / PRD-1).